Reading from the N-terminus, the 166-residue chain is MSADGVFRDQGGFVTTTVDSFLRWAQSNSIWPLTFGLACCAIEMMNLASGPRYDIARFGSEAFRASPRQADLIFISGRVSNKMAPVIKRVYSQMLEPKWVVAFGACASSGGIFDNYAIMQGVDNLLPVDIYVPGCPPTPEAVIYAVQKLRDRIRKEDPRGGIIVRG.

[4Fe-4S] cluster contacts are provided by Cys39, Cys40, Cys106, and Cys135.

It belongs to the complex I 20 kDa subunit family. As to quaternary structure, NDH-1 is composed of 14 different subunits. Subunits NuoB, C, D, E, F, and G constitute the peripheral sector of the complex. It depends on [4Fe-4S] cluster as a cofactor.

The protein resides in the cell membrane. It carries out the reaction a quinone + NADH + 5 H(+)(in) = a quinol + NAD(+) + 4 H(+)(out). NDH-1 shuttles electrons from NADH, via FMN and iron-sulfur (Fe-S) centers, to quinones in the respiratory chain. The immediate electron acceptor for the enzyme in this species is believed to be a menaquinone. Couples the redox reaction to proton translocation (for every two electrons transferred, four hydrogen ions are translocated across the cytoplasmic membrane), and thus conserves the redox energy in a proton gradient. This is NADH-quinone oxidoreductase subunit B 1 from Symbiobacterium thermophilum (strain DSM 24528 / JCM 14929 / IAM 14863 / T).